Here is a 149-residue protein sequence, read N- to C-terminus: Ribosome-binding factor A (149 aa).

The interval 124-149 (AKLREGAVPAGDADPYKTSSKSESEE) is disordered.

It belongs to the RbfA family. Monomer. Binds 30S ribosomal subunits, but not 50S ribosomal subunits or 70S ribosomes.

The protein localises to the cytoplasm. Functionally, one of several proteins that assist in the late maturation steps of the functional core of the 30S ribosomal subunit. Associates with free 30S ribosomal subunits (but not with 30S subunits that are part of 70S ribosomes or polysomes). Required for efficient processing of 16S rRNA. May interact with the 5'-terminal helix region of 16S rRNA. In Corynebacterium glutamicum (strain R), this protein is Ribosome-binding factor A.